Reading from the N-terminus, the 112-residue chain is Cytochrome c-551 (112 aa).

The signal sequence occupies residues 1-20 (MKSKLSILMIGFALSVLLAA). A lipid anchor (N-palmitoyl cysteine) is attached at Cys-21. Residue Cys-21 is the site of S-diacylglycerol cysteine attachment. Over residues 25–35 (DAKEEKTDTGS) the composition is skewed to basic and acidic residues. Residues 25–44 (DAKEEKTDTGSKTEATASEG) form a disordered region. The region spanning 39–112 (ATASEGEELY…VIAKWLSEKK (74 aa)) is the Cytochrome c domain. Heme c contacts are provided by Cys-52, Cys-55, His-56, and Met-91.

Post-translationally, binds 1 heme c group covalently per subunit.

The protein localises to the cell membrane. Electron carrier protein. This Bacillus subtilis (strain 168) protein is Cytochrome c-551 (cccB).